Here is a 136-residue protein sequence, read N- to C-terminus: Large ribosomal subunit protein uL16 (136 aa).

It belongs to the universal ribosomal protein uL16 family. Part of the 50S ribosomal subunit.

Functionally, binds 23S rRNA and is also seen to make contacts with the A and possibly P site tRNAs. This Rickettsia massiliae (strain Mtu5) protein is Large ribosomal subunit protein uL16.